The chain runs to 335 residues: Large ribosomal subunit protein uL10 (335 aa).

The disordered stretch occupies residues Gly-304–Phe-335. A compositionally biased stretch (basic and acidic residues) spans Val-314–Ala-325.

This sequence belongs to the universal ribosomal protein uL10 family. As to quaternary structure, part of the 50S ribosomal subunit. Homodimer, it forms part of the ribosomal stalk which helps the ribosome interact with GTP-bound translation factors. Forms both a pentameric L10(L12)2(L12)2 and heptameric L10(L12)2(L12)2(L12)2 complex, where L10 forms an elongated spine to which the L12 dimers bind in a sequential fashion. The proportion of heptameric complexes increases during cell growth.

Functionally, forms part of the ribosomal stalk, playing a central role in the interaction of the ribosome with GTP-bound translation factors. The polypeptide is Large ribosomal subunit protein uL10 (Methanococcus maripaludis (strain DSM 14266 / JCM 13030 / NBRC 101832 / S2 / LL)).